Reading from the N-terminus, the 334-residue chain is MERCSVAQQFEDRFHRKFYYLRLSVTDVCNFKCTYCLPDGYQPSGQKNSSFLNLSEIRRVVKAFADCGTSKVRITGGEPSLRKDFTDIIHTVASTQGIKRVATTTNGYRMEKHIGEWKEAGLNQINVSVDSLDPRMFHQITGENKFHQVMSGIDRAFEVGFEQVKVNVVLMKDLNHNELPAFLHWIKHRPIQLRFIELMQTGEMDTLFQQHHVSGVAIRNHLIANGWLLKVKAANDGPAQVFVHPDYQGEIGLIMPYEKDFCASCNRLRVSAKGKLHLCLFGDRGVELRDLMQQDDQEPDLIARIQSELQTKSVSHFLNEGQTGMTPHLASIGG.

Residues 13–239 (RFHRKFYYLR…KVKAANDGPA (227 aa)) form the Radical SAM core domain. A GTP-binding site is contributed by Arg22. Residues Cys29 and Cys33 each contribute to the [4Fe-4S] cluster site. Residue Tyr35 participates in S-adenosyl-L-methionine binding. Residue Cys36 participates in [4Fe-4S] cluster binding. Residue Arg73 coordinates GTP. Gly77 contacts S-adenosyl-L-methionine. Thr104 serves as a coordination point for GTP. Position 128 (Ser128) interacts with S-adenosyl-L-methionine. Lys165 serves as a coordination point for GTP. Met199 provides a ligand contact to S-adenosyl-L-methionine. Residues Cys262 and Cys265 each coordinate [4Fe-4S] cluster. 267 to 269 (RLR) contacts GTP. Cys279 is a binding site for [4Fe-4S] cluster.

This sequence belongs to the radical SAM superfamily. MoaA family. Monomer and homodimer. The cofactor is [4Fe-4S] cluster.

The catalysed reaction is GTP + AH2 + S-adenosyl-L-methionine = (8S)-3',8-cyclo-7,8-dihydroguanosine 5'-triphosphate + 5'-deoxyadenosine + L-methionine + A + H(+). Its pathway is cofactor biosynthesis; molybdopterin biosynthesis. Its function is as follows. Catalyzes the cyclization of GTP to (8S)-3',8-cyclo-7,8-dihydroguanosine 5'-triphosphate. This is GTP 3',8-cyclase from Vibrio vulnificus (strain YJ016).